A 411-amino-acid polypeptide reads, in one-letter code: Histidine--tRNA ligase (411 aa).

It belongs to the class-II aminoacyl-tRNA synthetase family. Homodimer.

The protein resides in the cytoplasm. It carries out the reaction tRNA(His) + L-histidine + ATP = L-histidyl-tRNA(His) + AMP + diphosphate + H(+). In Dictyoglomus turgidum (strain DSM 6724 / Z-1310), this protein is Histidine--tRNA ligase.